The chain runs to 90 residues: UPF0213 protein lwe0147 (90 aa).

One can recognise a GIY-YIG domain in the interval 5–83 (NEHFFYVLKC…SRKNKDSYLI (79 aa)).

It belongs to the UPF0213 family.

This chain is UPF0213 protein lwe0147, found in Listeria welshimeri serovar 6b (strain ATCC 35897 / DSM 20650 / CCUG 15529 / CIP 8149 / NCTC 11857 / SLCC 5334 / V8).